We begin with the raw amino-acid sequence, 216 residues long: Probable Golgi SNAP receptor complex member 2 (216 aa).

Topologically, residues Met1–Arg194 are cytoplasmic. Residues Gln62 to Gln103 adopt a coiled-coil conformation. The chain crosses the membrane as a helical; Anchor for type IV membrane protein span at residues Ile195–Val215. Leu216 is a topological domain (vesicular).

Belongs to the GOSR2 family. In terms of assembly, part of a unique SNARE complex.

It is found in the golgi apparatus. The protein resides in the cis-Golgi network membrane. It localises to the golgi apparatus membrane. The protein localises to the endoplasmic reticulum membrane. In terms of biological role, involved in transport of proteins from the cis/medial-Golgi to the trans-Golgi network. The sequence is that of Probable Golgi SNAP receptor complex member 2 from Drosophila melanogaster (Fruit fly).